A 508-amino-acid chain; its full sequence is Histidine ammonia-lyase (508 aa).

The segment at residues 143-145 (ASG) is a cross-link (5-imidazolinone (Ala-Gly)). Serine 144 carries the 2,3-didehydroalanine (Ser) modification.

Belongs to the PAL/histidase family. Post-translationally, contains an active site 4-methylidene-imidazol-5-one (MIO), which is formed autocatalytically by cyclization and dehydration of residues Ala-Ser-Gly.

The protein resides in the cytoplasm. The enzyme catalyses L-histidine = trans-urocanate + NH4(+). Its pathway is amino-acid degradation; L-histidine degradation into L-glutamate; N-formimidoyl-L-glutamate from L-histidine: step 1/3. The protein is Histidine ammonia-lyase of Anaeromyxobacter dehalogenans (strain 2CP-C).